The primary structure comprises 129 residues: UPF0325 protein SG1947 (129 aa).

The protein belongs to the UPF0325 family.

This chain is UPF0325 protein SG1947, found in Sodalis glossinidius (strain morsitans).